We begin with the raw amino-acid sequence, 478 residues long: F-box/kelch-repeat protein At1g51550 (478 aa).

Residues 1–20 (MAAESTRNSSPPSTSQSSSP) are disordered. A compositionally biased stretch (low complexity) spans 9 to 20 (SSPPSTSQSSSP). The F-box domain occupies 18 to 64 (SSPIINLPDDHLLTILLLLPVDSILSFSMTCKRYKSLACSDSLWEAL). Kelch repeat units lie at residues 135 to 187 (LVLF…VIGE) and 246 to 299 (KMVV…CIRE).

This is F-box/kelch-repeat protein At1g51550 from Arabidopsis thaliana (Mouse-ear cress).